A 419-amino-acid polypeptide reads, in one-letter code: E3 ubiquitin-protein ligase RNF130 (419 aa).

The first 27 residues, 1 to 27 (MSGAARAGPARLAALALLTCSLWPTRA), serve as a signal peptide directing secretion. The Extracellular portion of the chain corresponds to 28–194 (DNASQEYYTA…MPPKNFSRGS (167 aa)). N29, N40, N112, N135, N172, and N189 each carry an N-linked (GlcNAc...) asparagine glycan. The region spanning 105–176 (IALLQRGNCT…SYLEKNISVQ (72 aa)) is the PA domain. Residues 195 to 217 (LVFVSISFIVLMIISSAWLIFYF) form a helical membrane-spanning segment. The Cytoplasmic portion of the chain corresponds to 218–419 (IQKIRYTNAR…SLNANEVEWF (202 aa)). Residues 264-305 (CAVCIESYKQNDVVRVLPCKHVFHKSCVDPWLSEHCTCPMCK) form an RING-type zinc finger.

As to expression, expression is highest in liver, with lesser amounts in the lung, spleen, brain, heart, kidney and testis.

The protein resides in the membrane. Its subcellular location is the cytoplasm. It catalyses the reaction S-ubiquitinyl-[E2 ubiquitin-conjugating enzyme]-L-cysteine + [acceptor protein]-L-lysine = [E2 ubiquitin-conjugating enzyme]-L-cysteine + N(6)-ubiquitinyl-[acceptor protein]-L-lysine.. It functions in the pathway protein modification; protein ubiquitination. Acts as an E3 ubiquitin-protein ligase. May have a role during the programmed cell death of hematopoietic cells. This chain is E3 ubiquitin-protein ligase RNF130, found in Mus musculus (Mouse).